The following is a 250-amino-acid chain: 5'-nucleotidase SurE (250 aa).

Asp-8, Asp-9, Ser-40, and Asn-94 together coordinate a divalent metal cation.

The protein belongs to the SurE nucleotidase family. It depends on a divalent metal cation as a cofactor.

Its subcellular location is the cytoplasm. It catalyses the reaction a ribonucleoside 5'-phosphate + H2O = a ribonucleoside + phosphate. Nucleotidase that shows phosphatase activity on nucleoside 5'-monophosphates. The chain is 5'-nucleotidase SurE from Wolbachia sp. subsp. Brugia malayi (strain TRS).